The following is a 244-amino-acid chain: 7-cyano-7-deazaguanine synthase (244 aa).

Position 14–24 (14–24 (FSGGQDSATCV)) interacts with ATP. The Zn(2+) site is built by Cys-202, Cys-217, Cys-220, and Cys-223.

This sequence belongs to the QueC family. Requires Zn(2+) as cofactor.

It catalyses the reaction 7-carboxy-7-deazaguanine + NH4(+) + ATP = 7-cyano-7-deazaguanine + ADP + phosphate + H2O + H(+). Its pathway is purine metabolism; 7-cyano-7-deazaguanine biosynthesis. In terms of biological role, catalyzes the ATP-dependent conversion of 7-carboxy-7-deazaguanine (CDG) to 7-cyano-7-deazaguanine (preQ(0)). This Burkholderia mallei (strain NCTC 10229) protein is 7-cyano-7-deazaguanine synthase.